A 291-amino-acid polypeptide reads, in one-letter code: N-acetylmannosamine kinase (291 aa).

Residues 5–12 (AIDIGGTK) and 132–139 (GVGGGVVS) contribute to the ATP site. The Zn(2+) site is built by His-156, Cys-166, Cys-168, and Cys-173.

The protein belongs to the ROK (NagC/XylR) family. NanK subfamily. In terms of assembly, homodimer.

It carries out the reaction an N-acyl-D-mannosamine + ATP = an N-acyl-D-mannosamine 6-phosphate + ADP + H(+). It participates in amino-sugar metabolism; N-acetylneuraminate degradation; D-fructose 6-phosphate from N-acetylneuraminate: step 2/5. Catalyzes the phosphorylation of N-acetylmannosamine (ManNAc) to ManNAc-6-P. The polypeptide is N-acetylmannosamine kinase (Escherichia coli (strain ATCC 8739 / DSM 1576 / NBRC 3972 / NCIMB 8545 / WDCM 00012 / Crooks)).